A 180-amino-acid polypeptide reads, in one-letter code: uncharacterized protein (180 aa).

This is an uncharacterized protein from Haemophilus influenzae (strain ATCC 51907 / DSM 11121 / KW20 / Rd).